The chain runs to 515 residues: Glucose-6-phosphate 1-dehydrogenase (515 aa).

Residues Arg-53 and Lys-160 each contribute to the NADP(+) site. 4 residues coordinate substrate: His-190, Lys-194, Glu-228, and Asp-247. His-252 (proton acceptor) is an active-site residue. Lys-352 contacts substrate.

It belongs to the glucose-6-phosphate dehydrogenase family.

The catalysed reaction is D-glucose 6-phosphate + NADP(+) = 6-phospho-D-glucono-1,5-lactone + NADPH + H(+). It functions in the pathway carbohydrate degradation; pentose phosphate pathway; D-ribulose 5-phosphate from D-glucose 6-phosphate (oxidative stage): step 1/3. In terms of biological role, catalyzes the oxidation of glucose 6-phosphate to 6-phosphogluconolactone. The sequence is that of Glucose-6-phosphate 1-dehydrogenase from Treponema pallidum (strain Nichols).